A 597-amino-acid polypeptide reads, in one-letter code: Elongation factor 4 (597 aa).

The tr-type G domain occupies 2–184; it reads KNIRNFSIIA…EIVAKIPAPT (183 aa). Residues 14 to 19 and 131 to 134 each bind GTP; these read DHGKST and NKID.

Belongs to the TRAFAC class translation factor GTPase superfamily. Classic translation factor GTPase family. LepA subfamily.

The protein localises to the cell inner membrane. The catalysed reaction is GTP + H2O = GDP + phosphate + H(+). Required for accurate and efficient protein synthesis under certain stress conditions. May act as a fidelity factor of the translation reaction, by catalyzing a one-codon backward translocation of tRNAs on improperly translocated ribosomes. Back-translocation proceeds from a post-translocation (POST) complex to a pre-translocation (PRE) complex, thus giving elongation factor G a second chance to translocate the tRNAs correctly. Binds to ribosomes in a GTP-dependent manner. This is Elongation factor 4 from Neisseria meningitidis serogroup C (strain 053442).